The following is a 71-amino-acid chain: Protein SlyX homolog (71 aa).

Belongs to the SlyX family.

This is Protein SlyX homolog from Rhodospirillum rubrum (strain ATCC 11170 / ATH 1.1.1 / DSM 467 / LMG 4362 / NCIMB 8255 / S1).